Reading from the N-terminus, the 347-residue chain is NADH-ubiquinone oxidoreductase chain 2 (347 aa).

Transmembrane regions (helical) follow at residues 1–21 (MNPMIFTSLLATIMLGTSIVL), 25–45 (HWFLTWLGFEMNMMAIIPVLM), 68–88 (MILVLAIIINLMYSGQWTIMI), 96–116 (MLITIALVMKLGLAPFHFWVP), 122–142 (VSLSSGLILLTWQKIAPLSLL), 145–165 (IFPSINTNLLLIMSLLSIMIG), 178–198 (IMAYSSIAHMGWMIAIMIYNP), 201–221 (SLLNLLIYIMMTSSMFMLLII), 239–259 (IVVSTMMVILLSLGGLPPLTG), 274–294 (SSVMLPSLMAILALLNLFFYM), and 326–346 (MMSLISMSMLALPLAPSLITL).

It belongs to the complex I subunit 2 family. In terms of assembly, core subunit of respiratory chain NADH dehydrogenase (Complex I) which is composed of 45 different subunits. Interacts with TMEM242.

The protein resides in the mitochondrion inner membrane. The enzyme catalyses a ubiquinone + NADH + 5 H(+)(in) = a ubiquinol + NAD(+) + 4 H(+)(out). Core subunit of the mitochondrial membrane respiratory chain NADH dehydrogenase (Complex I) which catalyzes electron transfer from NADH through the respiratory chain, using ubiquinone as an electron acceptor. Essential for the catalytic activity and assembly of complex I. This chain is NADH-ubiquinone oxidoreductase chain 2, found in Sylvisorex lunaris (Moon forest shrew).